The primary structure comprises 55 residues: DNA-binding protein (55 aa).

The segment at 1–55 (MVYRRRRRSSTGTTYGSTRRRRSSGYRRRPGRPRTYRRSRSRSSTGRRSYRTRYY) is disordered. Tandem repeats lie at residues 5-10 (RRRRSS) and 19-24 (RRRRSS). The 2 X 6 AA repeats of R-R-R-R-S-S stretch occupies residues 5-24 (RRRRSSTGTTYGSTRRRRSS). Residues 18-41 (TRRRRSSGYRRRPGRPRTYRRSRS) show a composition bias toward basic residues.

Interacts with protein AC132. Post-translationally, phosphorylated.

It localises to the virion. The protein resides in the host cytoplasm. Plays a role in viral DNA packaging and nucleocapsid assembly. Promotes viral gene transcription during the late stage of infection while it is non-essential for the basal level of viral gene transcription. In Lepidoptera (butterflies and moths), this protein is DNA-binding protein (P6.9).